The chain runs to 815 residues: Cilia- and flagella-associated protein 251 (815 aa).

10 WD repeats span residues Gly58 to Thr99, Pro103 to Glu148, Pro166 to Gln205, Gln218 to Gly257, Ile271 to Phe308, Ser379 to Gly418, Ala420 to Val460, Asn463 to Arg502, Ser511 to Gly553, and Ser573 to Ser612.

As to quaternary structure, identified in a spoke-associated complex containing CFAP61, CFAP91 and CFAP251; the complex is associated with the radial spokes in the axoneme. The complex associates with Calmodulin; the association is calcium sensitive.

It is found in the cytoplasm. Its subcellular location is the cytoskeleton. It localises to the flagellum axoneme. As component of a spoke-associated complex, regulates flagellar dynein activity by mediating regulatory signals between the radial spokes and dynein arms. This is Cilia- and flagella-associated protein 251 from Chlamydomonas reinhardtii (Chlamydomonas smithii).